The following is a 609-amino-acid chain: UvrABC system protein C (609 aa).

A GIY-YIG domain is found at serine 16–valine 94. The UVR domain occupies lysine 203–valine 238.

The protein belongs to the UvrC family. Interacts with UvrB in an incision complex.

The protein resides in the cytoplasm. Its function is as follows. The UvrABC repair system catalyzes the recognition and processing of DNA lesions. UvrC both incises the 5' and 3' sides of the lesion. The N-terminal half is responsible for the 3' incision and the C-terminal half is responsible for the 5' incision. The sequence is that of UvrABC system protein C from Shewanella sp. (strain ANA-3).